A 457-amino-acid chain; its full sequence is MGSVTSKTNDELESFLNKRLGGSMTSSNKTVSVLLGAQWGDEGKGKIIDYLIENHKINVTARCQGGNNAGHTVVANGRKYDFHILPSGIISPTCFNVIGNGVVVNLDAFFSELAHNGILEESGWEKRIMISSEAHLVFGVHSQVDGRQEDSLAAKNKIGTTNRGIGPTYSSKCFRNGIRVADLMADFEEFSEKYRRLVEHYKKQFPSIEVNVDEELAKFKQHREKLAELKLVGDTVGFIHEQRNAGKQVLVEGANGALLDIDFGTYPYVTSSNSTVGGACTGIGVPPTAVGNVIGVVKAYQTRVGTGPFPTELFDSDGEKLQTIGKEVGVTTGRKRRCGWIDLFLLRRSAMINGYTAIALTKLDILDTFPTIKVAVGYKLNGQVLSSPPAQANAWGAIEVEYKEFEGWNEPTVGVRKFEDLPEKCRQYVKFIEDFIKVPIVYIGVGAERESLIVRQQ.

GTP is bound by residues 40–46 (GDEGKGK) and 70–72 (GHT). The active-site Proton acceptor is the D41. Mg(2+)-binding residues include D41 and G70. IMP is bound by residues 41 to 44 (DEGK), 68 to 71 (NAGH), T161, R175, N255, T270, and R334. H71 functions as the Proton donor in the catalytic mechanism. Substrate is bound at residue 330–336 (VTTGRKR). Residues R336, 362-364 (KLD), and 444-446 (GVG) contribute to the GTP site.

The protein belongs to the adenylosuccinate synthetase family. As to quaternary structure, homodimer. The cofactor is Mg(2+).

It localises to the cytoplasm. It carries out the reaction IMP + L-aspartate + GTP = N(6)-(1,2-dicarboxyethyl)-AMP + GDP + phosphate + 2 H(+). Its pathway is purine metabolism; AMP biosynthesis via de novo pathway; AMP from IMP: step 1/2. Plays an important role in the de novo pathway and in the salvage pathway of purine nucleotide biosynthesis. Catalyzes the first committed step in the biosynthesis of AMP from IMP. This Caenorhabditis elegans protein is Adenylosuccinate synthetase.